Reading from the N-terminus, the 426-residue chain is Enolase (426 aa).

Gln163 is a (2R)-2-phosphoglycerate binding site. Glu205 serves as the catalytic Proton donor. Asp242, Glu285, and Asp312 together coordinate Mg(2+). (2R)-2-phosphoglycerate contacts are provided by Lys337, Arg366, Ser367, and Lys388. The active-site Proton acceptor is the Lys337.

It belongs to the enolase family. Requires Mg(2+) as cofactor.

The protein resides in the cytoplasm. It is found in the secreted. The protein localises to the cell surface. It catalyses the reaction (2R)-2-phosphoglycerate = phosphoenolpyruvate + H2O. It functions in the pathway carbohydrate degradation; glycolysis; pyruvate from D-glyceraldehyde 3-phosphate: step 4/5. Catalyzes the reversible conversion of 2-phosphoglycerate (2-PG) into phosphoenolpyruvate (PEP). It is essential for the degradation of carbohydrates via glycolysis. The protein is Enolase of Nitrobacter winogradskyi (strain ATCC 25391 / DSM 10237 / CIP 104748 / NCIMB 11846 / Nb-255).